Consider the following 273-residue polypeptide: Bis(5'-nucleosyl)-tetraphosphatase, symmetrical (273 aa).

The protein belongs to the Ap4A hydrolase family.

The catalysed reaction is P(1),P(4)-bis(5'-adenosyl) tetraphosphate + H2O = 2 ADP + 2 H(+). Hydrolyzes diadenosine 5',5'''-P1,P4-tetraphosphate to yield ADP. This is Bis(5'-nucleosyl)-tetraphosphatase, symmetrical from Aeromonas hydrophila subsp. hydrophila (strain ATCC 7966 / DSM 30187 / BCRC 13018 / CCUG 14551 / JCM 1027 / KCTC 2358 / NCIMB 9240 / NCTC 8049).